Reading from the N-terminus, the 357-residue chain is Mitochondrial carrier protein LEU5 (357 aa).

6 consecutive transmembrane segments (helical) span residues 31-47, 103-119, 136-153, 208-228, 269-285, and 325-347; these read DYIVRSGLAGGISGSCA, LRIFPYAAVKFVAYEQI, LVSGSLAGLCSVFITYPL, VPTVLGMIPYAGVSFFAHDLL, ISGGLAGMASQTAAYPF, and GFFVGLSIGYIKVTPMVACSFFV. 3 Solcar repeats span residues 31–122, 130–231, and 262–354; these read DYIV…IRNT, ESHW…LHDV, and LRTW…MKWN.

The protein belongs to the mitochondrial carrier (TC 2.A.29) family.

It localises to the mitochondrion inner membrane. In terms of biological role, required for the accumulation of coenzyme A in the mitochondrial matrix. In Saccharomyces cerevisiae (strain ATCC 204508 / S288c) (Baker's yeast), this protein is Mitochondrial carrier protein LEU5 (LEU5).